Consider the following 860-residue polypeptide: Leucine--tRNA ligase (860 aa).

The 'HIGH' region signature appears at 42–52 (PYPSGRLHMGH). The 'KMSKS' region motif lies at 619 to 623 (KMSKS). Residue K622 participates in ATP binding.

This sequence belongs to the class-I aminoacyl-tRNA synthetase family.

The protein localises to the cytoplasm. It carries out the reaction tRNA(Leu) + L-leucine + ATP = L-leucyl-tRNA(Leu) + AMP + diphosphate. This Salmonella agona (strain SL483) protein is Leucine--tRNA ligase.